A 230-amino-acid chain; its full sequence is Small ribosomal subunit protein uS2 (230 aa).

This sequence belongs to the universal ribosomal protein uS2 family.

The polypeptide is Small ribosomal subunit protein uS2 (Prochlorococcus marinus (strain NATL2A)).